Here is a 272-residue protein sequence, read N- to C-terminus: Acetylglutamate kinase (272 aa).

Substrate is bound by residues Gly46 to Ala47, Arg68, and Asn166.

It belongs to the acetylglutamate kinase family. ArgB subfamily.

The protein resides in the cytoplasm. The catalysed reaction is N-acetyl-L-glutamate + ATP = N-acetyl-L-glutamyl 5-phosphate + ADP. It participates in amino-acid biosynthesis; L-arginine biosynthesis; N(2)-acetyl-L-ornithine from L-glutamate: step 2/4. Functionally, catalyzes the ATP-dependent phosphorylation of N-acetyl-L-glutamate. The sequence is that of Acetylglutamate kinase from Dehalococcoides mccartyi (strain ATCC BAA-2100 / JCM 16839 / KCTC 5957 / BAV1).